A 223-amino-acid polypeptide reads, in one-letter code: MGDNSAAAAAVAAPRGRFGRICVFCGSNAGNRAVFGDAALQLGQELVSRGIELVYGGGSVGLMGLIAQTVLDGGCGVLGVIPKALMPTEISGASVGEVKIVSDMHERKAEMARQSDAFIALPGGYGTMEELLEMITWSQLGIHDKPVGLLNVDGYYDPLLALFDKGAAEGFIKADCRQIIVSAPTAHELLRKMEQYTRSHQEVAPRTSWEMSELGYGKTPEES.

Residues Glu-89, 107 to 108 (RK), 124 to 130 (GYGTMEE), and Thr-136 contribute to the substrate site. The interval 201 to 223 (QEVAPRTSWEMSELGYGKTPEES) is disordered.

It belongs to the LOG family. Expressed in shoot apex, immature inflorescences and flowers.

It catalyses the reaction N(6)-(dimethylallyl)adenosine 5'-phosphate + H2O = N(6)-dimethylallyladenine + D-ribose 5-phosphate. The enzyme catalyses 9-ribosyl-trans-zeatin 5'-phosphate + H2O = trans-zeatin + D-ribose 5-phosphate. Its function is as follows. Cytokinin-activating enzyme working in the direct activation pathway. Phosphoribohydrolase that converts inactive cytokinin nucleotides to the biologically active free-base forms. The polypeptide is Probable cytokinin riboside 5'-monophosphate phosphoribohydrolase LOGL1 (LOGL1) (Oryza sativa subsp. japonica (Rice)).